The chain runs to 414 residues: Enolase (414 aa).

(2R)-2-phosphoglycerate is bound at residue Q162. The active-site Proton donor is E204. Residues D239, E280, and D307 each coordinate Mg(2+). K332, R361, S362, and K383 together coordinate (2R)-2-phosphoglycerate. K332 acts as the Proton acceptor in catalysis.

The protein belongs to the enolase family. The cofactor is Mg(2+).

The protein localises to the cytoplasm. The protein resides in the secreted. It localises to the cell surface. The enzyme catalyses (2R)-2-phosphoglycerate = phosphoenolpyruvate + H2O. Its pathway is carbohydrate degradation; glycolysis; pyruvate from D-glyceraldehyde 3-phosphate: step 4/5. Functionally, catalyzes the reversible conversion of 2-phosphoglycerate (2-PG) into phosphoenolpyruvate (PEP). It is essential for the degradation of carbohydrates via glycolysis. This Campylobacter jejuni subsp. doylei (strain ATCC BAA-1458 / RM4099 / 269.97) protein is Enolase.